A 1172-amino-acid polypeptide reads, in one-letter code: Phytochrome B (1172 aa).

A compositionally biased stretch (gly residues) spans 1-16 (MVSGVGGSGGGRGGGR). Residues 1–54 (MVSGVGGSGGGRGGGRGGEEEPSSSHTPNNRRGGEQAQSSGTKSLRPRSNTESM) are disordered. The segment covering 24–54 (SSHTPNNRRGGEQAQSSGTKSLRPRSNTESM) has biased composition (polar residues). The 182-residue stretch at 252–433 (DIKLLCDTVV…AFGLQLNMEL (182 aa)) folds into the GAF domain. Residue cysteine 357 coordinates phytochromobilin. PAS domains lie at 652–723 (VARE…LRGD) and 786–857 (DYKA…MIVL). A Histidine kinase domain is found at 934–1153 (YICQVIKNPL…LIILELPVPR (220 aa)).

Belongs to the phytochrome family. As to quaternary structure, homodimer. Interacts with ADO1 and PKS4. Stabilized by interactions with PAPP5 and FYPP3 which are enhanced in the phosphorylated Pfr form. Interacts with VOZ1 and VOZ2. Binds, via its photosensory domain, to PTAC12/HMR/PAP5 when photoactivated; this interaction stimulates its localization to photobodies. Interacts with CRY1 specifically when in the dark/far-red (Pr) state, but not when red light-activated (Pfr). Interacts with PIF4 and PIF5 in response to low blue light (LBL). Component of a red light-dependent nuclear complex made of PHL, PHYB and CO. Interacts directly with PHL. Binds to UNE10/PIF8 when red light-activated (Pfr). When light-activated, interacts with PCH1 and PCHL. Associated with DRT111/RSN2/SFPS, SMP2 and SWAP1 in nuclear photobodies upon response to red light (Pfr form). Post-translationally, contains one covalently linked phytochromobilin chromophore. In terms of tissue distribution, expressed in fruits, flowers, leaves, stems, seedlings and roots.

Its subcellular location is the cytoplasm. The protein localises to the nucleus. It is found in the nucleoplasm. It localises to the nucleus speckle. Its function is as follows. Regulatory photoreceptor which exists in two forms that are reversibly interconvertible by light: the Pr form that absorbs maximally in the red region of the spectrum and the Pfr form that absorbs maximally in the far-red region. Photoconversion of Pr to Pfr induces an array of morphogenetic responses, whereas reconversion of Pfr to Pr cancels the induction of those responses. Pfr controls the expression of a number of nuclear genes including those encoding the small subunit of ribulose-bisphosphate carboxylase, chlorophyll A/B binding protein, protochlorophyllide reductase, rRNA, etc. It also controls the expression of its own gene(s) in a negative feedback fashion. Involved in the flowering time regulation. Involved in light-regulated circadian phase control that triggers stomatal aperture, stomatal conductance, and CO(2) assimilation. Implicated in red light perception, and, to a lower extent, in blue light signaling. Controls thermomorphogenesis in the daytime and regulates temperature responses by associating with the promoters of key target genes in a temperature-dependent manner and subsequently repressing their expression in a PIF4-dependent manner (temperature-responsive transcriptional regulator); this process requires PTAC12/HMR/PAP5 (transcriptional activator). Thermal timer that integrates temperature information over the course of the night. Detabilizes UNE10/PIF8 in red light. The chain is Phytochrome B from Arabidopsis thaliana (Mouse-ear cress).